Consider the following 557-residue polypeptide: uncharacterized protein (557 aa).

The segment at 17-38 (NSAEFSIHSTSNPTNPEEPNIT) is disordered. The next 9 membrane-spanning stretches (helical) occupy residues 60–80 (LSLF…PSVA), 94–114 (GLLW…LSMA), 214–234 (SVGT…ILAM), 261–281 (FAIL…DAPF), 297–317 (GIIL…IVIA), 348–368 (LGIL…NLIA), 407–427 (VIGV…GAVF), 468–488 (IGFC…FPSV), and 498–518 (WTCL…AISG).

It belongs to the amino acid-polyamine-organocation (APC) superfamily.

It localises to the membrane. This is an uncharacterized protein from Schizosaccharomyces pombe (strain 972 / ATCC 24843) (Fission yeast).